The chain runs to 231 residues: Ureidoacrylate amidohydrolase RutB (231 aa).

Catalysis depends on aspartate 25, which acts as the Proton acceptor. Lysine 134 is a catalytic residue. Residue cysteine 167 is the Nucleophile of the active site.

This sequence belongs to the isochorismatase family. RutB subfamily.

It carries out the reaction (Z)-3-ureidoacrylate + H2O + H(+) = (Z)-3-aminoacrylate + NH4(+) + CO2. The catalysed reaction is (Z)-3-ureidoacrylate + H2O = (Z)-3-aminoacrylate + carbamate + H(+). The enzyme catalyses (Z)-2-methylureidoacrylate + H2O + H(+) = (Z)-2-methylaminoacrylate + NH4(+) + CO2. In terms of biological role, hydrolyzes ureidoacrylate to form aminoacrylate and carbamate. The carbamate hydrolyzes spontaneously, thereby releasing one of the nitrogen atoms of the pyrimidine ring as ammonia and one of its carbon atoms as CO2. This chain is Ureidoacrylate amidohydrolase RutB, found in Escherichia coli O139:H28 (strain E24377A / ETEC).